Consider the following 254-residue polypeptide: N-acetylglucosamine-induced protein 1 (254 aa).

It is found in the cytoplasm. In terms of biological role, N-acetylglucosamine-induced protein which plays a role in the N-acetylglucosamine metabolic pathway. The protein is N-acetylglucosamine-induced protein 1 of Candida albicans (strain SC5314 / ATCC MYA-2876) (Yeast).